The primary structure comprises 292 residues: Ephrin type-A receptor 4a (292 aa).

ATP-binding positions include 1 to 9 (IGIGEFGEV) and K27. One can recognise a Protein kinase domain in the interval 1–265 (IGIGEFGEVC…QIVNMLDKLI (265 aa)). D120 serves as the catalytic Proton acceptor. A Phosphotyrosine; by autocatalysis modification is found at Y153.

It belongs to the protein kinase superfamily. Tyr protein kinase family. Ephrin receptor subfamily. In terms of tissue distribution, widely expressed in the developing nervous system.

Its subcellular location is the cell membrane. The protein localises to the early endosome. The enzyme catalyses L-tyrosyl-[protein] + ATP = O-phospho-L-tyrosyl-[protein] + ADP + H(+). Functionally, receptor tyrosine kinase which binds membrane-bound ephrin family ligands residing on adjacent cells, leading to contact-dependent bidirectional signaling into neighboring cells. The signaling pathway downstream of the receptor is referred to as forward signaling while the signaling pathway downstream of the ephrin ligand is referred to as reverse signaling. Highly promiscuous, it has the unique property among Eph receptors to bind and to be physiologically activated by both GPI-anchored ephrin-A and transmembrane ephrin-B ligands including efna1 and efnb3. Upon activation by ephrin ligands, modulates cell morphology and integrin-dependent cell adhesion through regulation of the Rac, Rap and Rho GTPases activity. Plays an important role in the development of the nervous system controlling different steps of axonal guidance including the establishment of the corticospinal projections. The chain is Ephrin type-A receptor 4a (epha4a) from Danio rerio (Zebrafish).